Consider the following 303-residue polypeptide: Rhomboid-related protein 2 (303 aa).

Positions Met-20–Arg-39 are disordered. Basic and acidic residues predominate over residues Glu-28–Arg-39. Helical transmembrane passes span Pro-72 to Trp-92, Leu-128 to Ile-148, Val-159 to Pro-179, Leu-183 to Val-203, Phe-212 to Leu-232, Val-245 to Phe-265, and Phe-278 to Phe-298. The active-site Nucleophile is the Ser-187. His-250 is a catalytic residue.

The protein belongs to the peptidase S54 family. In terms of processing, proteolytic processing of the proenzyme produces a N-terminal fragment (NTF) and a C-terminal fragment (CTF). The processing is required for activation of the protease.

It is found in the cell membrane. The enzyme catalyses Cleaves type-1 transmembrane domains using a catalytic dyad composed of serine and histidine that are contributed by different transmembrane domains.. Its function is as follows. Involved in regulated intramembrane proteolysis and the subsequent release of functional polypeptides from their membrane anchors. Known substrate: EFNB3. The sequence is that of Rhomboid-related protein 2 (RHBDL2) from Homo sapiens (Human).